The following is a 219-amino-acid chain: Acetylxylan esterase (219 aa).

Catalysis depends on Ser15, which acts as the Nucleophile. Active-site charge relay system residues include Asp191 and His194.

It belongs to the 'GDSL' lipolytic enzyme family. Homooctamer, presenting a unique donut-shaped quaternary structure built of two staggered tetrameric rings. The eight active sites are organized in four closely situated pairs, which face the relatively wide internal cavity.

Its subcellular location is the cytoplasm. The enzyme catalyses Deacetylation of xylans and xylo-oligosaccharides.. The protein operates within glycan degradation; xylan degradation. Its function is as follows. Acetylxylan esterase involved in the degradation of xylan, a major structural heterogeneous polysaccharide found in plant biomass representing the second most abundant polysaccharide in the biosphere, after cellulose. Cleaves acetyl side groups from the xylose backbone units of the hemicellulolytic polymer xylan and xylo-oligosaccharides. Hydrolyzes about 20%-30% of the available acetyl groups on fully acetylated birch wood xylan. Completely deacetylates xylobiose peracetate (fully acetylated), and is active on both the alpha- and beta-forms of the sugar. Also hydrolyzes fully acetylated methyl-beta-D-xylopyranoside and methyl-beta-D-glucopyranoside, and the synthetic substrates 2-naphthyl acetate, 4-nitrophenyl acetate, 4-methylumbelliferyl acetate, and phenyl acetate. This is Acetylxylan esterase from Geobacillus stearothermophilus (Bacillus stearothermophilus).